The chain runs to 250 residues: tRNA (guanine-N(1)-)-methyltransferase (250 aa).

S-adenosyl-L-methionine-binding positions include glycine 115 and 135 to 140 (LGDFVL).

This sequence belongs to the RNA methyltransferase TrmD family. As to quaternary structure, homodimer.

The protein resides in the cytoplasm. It carries out the reaction guanosine(37) in tRNA + S-adenosyl-L-methionine = N(1)-methylguanosine(37) in tRNA + S-adenosyl-L-homocysteine + H(+). Functionally, specifically methylates guanosine-37 in various tRNAs. This is tRNA (guanine-N(1)-)-methyltransferase from Legionella pneumophila subsp. pneumophila (strain Philadelphia 1 / ATCC 33152 / DSM 7513).